The chain runs to 305 residues: Recombination-associated protein RdgC (305 aa).

Belongs to the RdgC family.

The protein localises to the cytoplasm. The protein resides in the nucleoid. In terms of biological role, may be involved in recombination. The protein is Recombination-associated protein RdgC of Sodalis glossinidius (strain morsitans).